A 106-amino-acid polypeptide reads, in one-letter code: MSTAIAQQKIRIRLKAFDRRMLDLSCEKIIETADNTAATAIGPIPLPTKRKIYCVLRSPHVDKDSREHFETRTHRRIIDIYSPSAKTIDALMKLDLPSGVDIEVKL.

This sequence belongs to the universal ribosomal protein uS10 family. Part of the 30S ribosomal subunit.

Involved in the binding of tRNA to the ribosomes. In Synechococcus sp. (strain CC9605), this protein is Small ribosomal subunit protein uS10.